The following is a 293-amino-acid chain: Ribosomal protein L11 methyltransferase (293 aa).

Positions 146, 167, 189, and 230 each coordinate S-adenosyl-L-methionine.

Belongs to the methyltransferase superfamily. PrmA family.

It is found in the cytoplasm. It carries out the reaction L-lysyl-[protein] + 3 S-adenosyl-L-methionine = N(6),N(6),N(6)-trimethyl-L-lysyl-[protein] + 3 S-adenosyl-L-homocysteine + 3 H(+). Functionally, methylates ribosomal protein L11. The protein is Ribosomal protein L11 methyltransferase of Colwellia psychrerythraea (strain 34H / ATCC BAA-681) (Vibrio psychroerythus).